Reading from the N-terminus, the 256-residue chain is Kallikrein-15 (256 aa).

A signal peptide spans 1–16; sequence MWLLLTLSFLLASTAA. The propeptide at 17–21 is activation peptide; it reads QDGDK. The Peptidase S1 domain maps to 22 to 254; that stretch reads LLEGDECAPH…YLEWIRETMK (233 aa). C47 and C63 are oxidised to a cystine. Catalysis depends on charge relay system residues H62 and D106. Intrachain disulfides connect C138-C215, C180-C194, and C205-C230. N-linked (GlcNAc...) asparagine glycosylation is present at N171. S209 serves as the catalytic Charge relay system. Residue N232 is glycosylated (N-linked (GlcNAc...) asparagine).

It belongs to the peptidase S1 family. Kallikrein subfamily. Highest expression in the thyroid gland. Also expressed in the prostate, salivary, and adrenal glands and in the colon testis and kidney.

The protein localises to the secreted. In terms of biological role, protease whose physiological substrate is not yet known. In Homo sapiens (Human), this protein is Kallikrein-15 (KLK15).